The primary structure comprises 234 residues: Peroxiredoxin-2E, chloroplastic (234 aa).

A chloroplast-targeting transit peptide spans 1–70; sequence MATSLSVSRF…TRSFATTPVT (70 aa). The Thioredoxin domain occupies 73–234; the sequence is ISVGDKLPDS…SSAEDMLKAL (162 aa). Phosphoserine is present on Ser-82. The active-site Cysteine sulfenic acid (-SOH) intermediate is Cys-121.

It belongs to the peroxiredoxin family. Prx5 subfamily. As to quaternary structure, monomer. As to expression, expressed in all tissues but predominantly in buds, siliques and seeds.

The protein resides in the plastid. It localises to the chloroplast stroma. It catalyses the reaction [glutaredoxin]-dithiol + a hydroperoxide = [glutaredoxin]-disulfide + an alcohol + H2O. In terms of biological role, thiol-specific peroxidase that catalyzes the reduction of hydrogen peroxide and organic hydroperoxides to water and alcohols, respectively. Plays a role in cell protection against oxidative stress by detoxifying peroxides. May be involved in chloroplast redox homeostasis. The chain is Peroxiredoxin-2E, chloroplastic (PRXIIE) from Arabidopsis thaliana (Mouse-ear cress).